The chain runs to 457 residues: Gustatory and odorant receptor 24 (457 aa).

The Cytoplasmic segment spans residues 1–115 (MSLYFNADTM…GGTAFVLASP (115 aa)). A helical membrane pass occupies residues 116–136 (SMTYCVLFFLLLTVYIAFILL). Residues 137-152 (NRIEIVRTLEGRFEES) lie on the Extracellular side of the membrane. A helical membrane pass occupies residues 153 to 173 (VIAYLFIVNILPILIIPLMWY). Residues 174–209 (ESRKVVSVVNGWVDFETVYRETTGRALELRLRTKAQ) lie on the Cytoplasmic side of the membrane. Residues 210 to 230 (VIAILLPILCSLSVAITHVTM) form a helical membrane-spanning segment. At 231-237 (VDFKLLQ) the chain is on the extracellular side. A helical transmembrane segment spans residues 238 to 258 (VIPYCVLDTITYMMGGYWYMA). Over 259-309 (CETLSITAKILAEDFQRALRHVGPAAKVSEYRSLWLRLSKLARDTGFSTCY) the chain is Cytoplasmic. The chain crosses the membrane as a helical span at residues 310–330 (TFTFICLYLFFIITLSIYGLM). Residues 331-341 (SQISDGFGVKD) lie on the Extracellular side of the membrane. Residues 342–362 (IGLAVTAFCSVGLLFYICDEA) traverse the membrane as a helical segment. At 363–421 (HYASFNVRTNFQKKLLMVELSWMNTDAQTEINMFLRATEMNPSSINLGGFFDVNRTLFK) the chain is on the cytoplasmic side. A helical transmembrane segment spans residues 422–442 (SLLATMVTYLVVLLQFQISIP). Over 443 to 457 (DEPSAMLMHSNSSHS) the chain is Extracellular. N-linked (GlcNAc...) asparagine glycosylation is present at Asn453.

The protein belongs to the insect chemoreceptor superfamily. Gustatory receptor (GR) family. Gr21a subfamily. As to expression, carbon dioxide-responsive neurons coexpress GPRgr22 and GPRgr24 in the maxillary palp, at both larval and adult life stages.

Its subcellular location is the cell membrane. In terms of biological role, gustatory receptor which mediates acceptance or avoidance behavior, depending on its substrates. GPRgr22 and GPRgr24 together are sufficient for olfactory carbon dioxide-chemosensation. This Anopheles gambiae (African malaria mosquito) protein is Gustatory and odorant receptor 24.